The following is a 535-amino-acid chain: Probable cytochrome P450 12b2, mitochondrial (535 aa).

C479 is a heme binding site.

It belongs to the cytochrome P450 family. Heme is required as a cofactor.

It is found in the mitochondrion membrane. This chain is Probable cytochrome P450 12b2, mitochondrial (Cyp12b2), found in Drosophila melanogaster (Fruit fly).